The sequence spans 114 residues: uncharacterized protein (114 aa).

2 disordered regions span residues 26–45 and 72–98; these read GMKQ…DALG and PKGS…SVQA.

This is an uncharacterized protein from Homo sapiens (Human).